A 100-amino-acid polypeptide reads, in one-letter code: Large ribosomal subunit protein eL30 (100 aa).

The protein belongs to the eukaryotic ribosomal protein eL30 family.

This is Large ribosomal subunit protein eL30 from Thermococcus sibiricus (strain DSM 12597 / MM 739).